The sequence spans 176 residues: dCTP deaminase (176 aa).

DCTP-binding positions include 99-104 and D115; that span reads RSTLAR. The active-site Proton donor/acceptor is the E125. Residue Q163 coordinates dCTP.

Belongs to the dCTP deaminase family. Homotrimer.

It catalyses the reaction dCTP + H2O + H(+) = dUTP + NH4(+). It functions in the pathway pyrimidine metabolism; dUMP biosynthesis; dUMP from dCTP (dUTP route): step 1/2. Its function is as follows. Catalyzes the deamination of dCTP to dUTP. The polypeptide is dCTP deaminase (Pyrobaculum arsenaticum (strain DSM 13514 / JCM 11321 / PZ6)).